A 464-amino-acid polypeptide reads, in one-letter code: GPI mannosyltransferase 2 (464 aa).

Residues 1–70 (MYYIGHPSYY…MTRSGYNYFK (70 aa)) lie on the Cytoplasmic side of the membrane. A helical membrane pass occupies residues 71–91 (GICVCTFLLSTILYLGIAVIM). At 92-166 (SHLCVFDDTA…ISFLAFRSKD (75 aa)) the chain is on the lumenal side. 2 N-linked (GlcNAc...) asparagine glycosylation sites follow: asparagine 108 and asparagine 139. Residues 167-187 (VVLLGIVSCFASIFFHAIACY) form a helical membrane-spanning segment. At 188–219 (ALYLLTKSIFSNQKMTAYTVIFYCFSPSGIYM) the chain is on the cytoplasmic side. The helical transmembrane segment at 220 to 240 (SVGYTESLFAAFSFLGLLLFI) threads the bilayer. The Lumenal segment spans residues 241-260 (KKQQYPAAFLWSLATLIRSN). A helical transmembrane segment spans residues 261–281 (GIFWCIFFGMPAIGTLKISLE). Over 282 to 289 (RLQLTFMQ) the chain is Cytoplasmic. The chain crosses the membrane as a helical span at residues 290 to 309 (VSQLVGYGTKCLIILVPFFY). Over 310–356 (NQYLGFKLFCPGVAWCNKSLPLIYPAVQEKYWNVGFLRYWTLNNIPN) the chain is Lumenal. Residue asparagine 326 is glycosylated (N-linked (GlcNAc...) asparagine). Residues 357–377 (FLFALLSIIPILFALFYSISG) traverse the membrane as a helical segment. Residues 378 to 388 (STLHSFRSIKS) lie on the Cytoplasmic side of the membrane. Residues 389–409 (HLVLSALYLYIGCFHMHTQVL) form a helical membrane-spanning segment. Residues 410–440 (NRMSSALPLLYWSMAHATLYAKSRNLKAFGH) lie on the Lumenal side of the membrane. Residues 441–461 (CILFVWIVYTVIQAGLYGSFL) traverse the membrane as a helical segment. Over 462–464 (PPA) the chain is Cytoplasmic.

The protein belongs to the PIGV family. In terms of assembly, part of the GPI mannosyltransferase 2 complex composed of gpi18 and C167.09.

Its subcellular location is the endoplasmic reticulum membrane. It functions in the pathway glycolipid biosynthesis; glycosylphosphatidylinositol-anchor biosynthesis. Functionally, mannosyltransferase involved in glycosylphosphatidylinositol-anchor biosynthesis. Responsible for the transfer of the second mannose to the glycosylphosphatidylinositol during GPI precursor assembly. The polypeptide is GPI mannosyltransferase 2 (gpi18) (Schizosaccharomyces pombe (strain 972 / ATCC 24843) (Fission yeast)).